The chain runs to 408 residues: Putative transporter AmpG 2 (408 aa).

The next 11 helical transmembrane spans lie at 11 to 31, 49 to 69, 84 to 104, 110 to 130, 154 to 174, 177 to 197, 224 to 244, 261 to 281, 294 to 311, 353 to 373, and 382 to 402; these read IFNILFILIIAFPGGLIYLLT, IGLFGLVNFIHIFKFLWGPLL, YCLVITLINCIFCVYVLTSFN, IPFVLCLVVLAFFSSIYDMLI, FRIGILISGSGALYLSTIISW, VYRTMAILCIPSLLLIIFYPL, CIVIISFMLLYRLQDSFLSIM, VGYKAFGMCATIFGGVIGGFL, VLIYHALSSLSFIYLYFL, IALITSITNVGTILIGSISGY, and YFFIVAGLCFIPAYILILYLP.

Belongs to the major facilitator superfamily.

The protein localises to the cell inner membrane. The polypeptide is Putative transporter AmpG 2 (ampG2) (Rickettsia prowazekii (strain Madrid E)).